Consider the following 302-residue polypeptide: Geranylgeranyl diphosphate synthase (302 aa).

Positions 53, 56, and 87 each coordinate isopentenyl diphosphate. Positions 94 and 100 each coordinate Mg(2+). Arginine 105 lines the (2E,6E)-farnesyl diphosphate pocket. Arginine 106 lines the isopentenyl diphosphate pocket. Lysine 189, threonine 190, and glutamine 227 together coordinate (2E,6E)-farnesyl diphosphate.

It belongs to the FPP/GGPP synthase family. Mg(2+) is required as a cofactor.

It catalyses the reaction isopentenyl diphosphate + (2E,6E)-farnesyl diphosphate = (2E,6E,10E)-geranylgeranyl diphosphate + diphosphate. It participates in isoprenoid biosynthesis; geranylgeranyl diphosphate biosynthesis; geranylgeranyl diphosphate from farnesyl diphosphate and isopentenyl diphosphate: step 1/1. Its function is as follows. Catalyzes the condensation of farnesyl diphosphate (FPP) and isopentenyl diphosphate (IPP) to yield geranylgeranyl diphosphate (GGPP) needed for biosynthesis of carotenoids and diterpenes. This chain is Geranylgeranyl diphosphate synthase (crtE), found in Pantoea ananas (Erwinia uredovora).